The sequence spans 206 residues: Large ribosomal subunit protein uL4 (206 aa).

The segment at Gly-46 to Glu-95 is disordered. Residues Ser-59–Gly-70 show a composition bias toward basic residues.

The protein belongs to the universal ribosomal protein uL4 family. As to quaternary structure, part of the 50S ribosomal subunit.

Its function is as follows. One of the primary rRNA binding proteins, this protein initially binds near the 5'-end of the 23S rRNA. It is important during the early stages of 50S assembly. It makes multiple contacts with different domains of the 23S rRNA in the assembled 50S subunit and ribosome. In terms of biological role, forms part of the polypeptide exit tunnel. The chain is Large ribosomal subunit protein uL4 from Neisseria meningitidis serogroup C (strain 053442).